Consider the following 447-residue polypeptide: Na(+)-translocating NADH-quinone reductase subunit A (447 aa).

Belongs to the NqrA family. As to quaternary structure, composed of six subunits; NqrA, NqrB, NqrC, NqrD, NqrE and NqrF.

The catalysed reaction is a ubiquinone + n Na(+)(in) + NADH + H(+) = a ubiquinol + n Na(+)(out) + NAD(+). Functionally, NQR complex catalyzes the reduction of ubiquinone-1 to ubiquinol by two successive reactions, coupled with the transport of Na(+) ions from the cytoplasm to the periplasm. NqrA to NqrE are probably involved in the second step, the conversion of ubisemiquinone to ubiquinol. The protein is Na(+)-translocating NADH-quinone reductase subunit A of Haemophilus influenzae (strain ATCC 51907 / DSM 11121 / KW20 / Rd).